The chain runs to 304 residues: Uricase (304 aa).

The residue at position 2 (A2) is an N-acetylalanine. K10 and K23 each carry N6-acetyllysine; alternate. Residues K10 and K23 each carry the N6-succinyllysine; alternate modification. The Charge relay system role is filled by K23. K27 and K36 each carry N6-acetyllysine. Phosphoserine occurs at positions 39 and 63. The Charge relay system role is filled by T68. Urate is bound by residues T68 and D69. N6-acetyllysine is present on residues K118, K122, and K164. F170 is a binding site for urate. N6-acetyllysine is present on residues K175 and K185. Position 187 (R187) interacts with urate. Residues K221 and K228 each carry the N6-acetyllysine; alternate modification. 2 positions are modified to N6-succinyllysine; alternate: K221 and K228. S232 bears the Phosphoserine mark. Positions 235, 236, and 262 each coordinate urate. Catalysis depends on H264, which acts as the Charge relay system. The residue at position 278 (K278) is an N6-acetyllysine. Position 289 is a phosphotyrosine (Y289). The Microbody targeting signal motif lies at 302–304; the sequence is SKL.

The protein belongs to the uricase family.

The protein localises to the peroxisome. The enzyme catalyses urate + O2 + H2O = 5-hydroxyisourate + H2O2. Its pathway is purine metabolism; urate degradation; (S)-allantoin from urate: step 1/3. Catalyzes the oxidation of uric acid to 5-hydroxyisourate, which is further processed to form (S)-allantoin. The sequence is that of Uricase (UOX) from Canis lupus familiaris (Dog).